Reading from the N-terminus, the 385-residue chain is Cell division protein FtsZ (385 aa).

Residues 20–24 (GGGGN), 107–109 (GTG), glutamate 138, arginine 142, and asparagine 186 each bind GTP.

It belongs to the FtsZ family. Homodimer. Polymerizes to form a dynamic ring structure in a strictly GTP-dependent manner. Interacts directly with several other division proteins.

The protein resides in the cytoplasm. Essential cell division protein that forms a contractile ring structure (Z ring) at the future cell division site. The regulation of the ring assembly controls the timing and the location of cell division. One of the functions of the FtsZ ring is to recruit other cell division proteins to the septum to produce a new cell wall between the dividing cells. Binds GTP and shows GTPase activity. The protein is Cell division protein FtsZ of Buchnera aphidicola subsp. Baizongia pistaciae (strain Bp).